Reading from the N-terminus, the 307-residue chain is Protease HtpX homolog (307 aa).

Residues 16 to 36 (LFMGVGYLIGGAAGAMIALVV) form a helical membrane-spanning segment. His-130 serves as a coordination point for Zn(2+). The active site involves Glu-131. A Zn(2+)-binding site is contributed by His-134. The next 2 helical transmembrane spans lie at 145–165 (ITAT…FFGG) and 172–192 (GPGI…AMLV). Glu-201 contacts Zn(2+). The segment at 278–307 (AGQSGSATPDPAPAPRGPWNGGAPRRGPWG) is disordered.

The protein belongs to the peptidase M48B family. Zn(2+) serves as cofactor.

The protein localises to the cell inner membrane. The chain is Protease HtpX homolog from Nitrobacter hamburgensis (strain DSM 10229 / NCIMB 13809 / X14).